The primary structure comprises 874 residues: Alanine--tRNA ligase (874 aa).

Residues His-563, His-567, Cys-665, and His-669 each coordinate Zn(2+).

The protein belongs to the class-II aminoacyl-tRNA synthetase family. Zn(2+) serves as cofactor.

Its subcellular location is the cytoplasm. The catalysed reaction is tRNA(Ala) + L-alanine + ATP = L-alanyl-tRNA(Ala) + AMP + diphosphate. Catalyzes the attachment of alanine to tRNA(Ala) in a two-step reaction: alanine is first activated by ATP to form Ala-AMP and then transferred to the acceptor end of tRNA(Ala). Also edits incorrectly charged Ser-tRNA(Ala) and Gly-tRNA(Ala) via its editing domain. The chain is Alanine--tRNA ligase from Actinobacillus pleuropneumoniae serotype 7 (strain AP76).